The sequence spans 193 residues: MYQDLIRSELNEAAQTLNNFLADEANILAIQQAAQLLAASFKADGKVLSCGNGGSHCDAMHFAEELTGRYRENRPGYPAIAISDPSHLSCVSNDFGYDYVFSRYVEAVGREGDVLLGISTSGNSGNIIRAIEAARAKGMKVITLTGKDGGKMAGSADVEIRVPHFGYADRIQEIHIKAIHIMIQLIEKEMASV.

In terms of domain architecture, SIS spans 37 to 193 (LAASFKADGK…QLIEKEMASV (157 aa)). 52–54 (NGG) contributes to the substrate binding site. The Zn(2+) site is built by His61 and Glu65. Residues Glu65, 93-94 (ND), 119-121 (STS), Ser124, and Gln172 each bind substrate. Residues Gln172 and His180 each coordinate Zn(2+).

The protein belongs to the SIS family. GmhA subfamily. Homotetramer. It depends on Zn(2+) as a cofactor.

The protein localises to the cytoplasm. The enzyme catalyses 2 D-sedoheptulose 7-phosphate = D-glycero-alpha-D-manno-heptose 7-phosphate + D-glycero-beta-D-manno-heptose 7-phosphate. Its pathway is carbohydrate biosynthesis; D-glycero-D-manno-heptose 7-phosphate biosynthesis; D-glycero-alpha-D-manno-heptose 7-phosphate and D-glycero-beta-D-manno-heptose 7-phosphate from sedoheptulose 7-phosphate: step 1/1. Functionally, catalyzes the isomerization of sedoheptulose 7-phosphate in D-glycero-D-manno-heptose 7-phosphate. This is Phosphoheptose isomerase from Edwardsiella ictaluri (strain 93-146).